Consider the following 102-residue polypeptide: Protein translation factor SUI1 homolog (102 aa).

It belongs to the SUI1 family.

This is Protein translation factor SUI1 homolog from Methanosarcina mazei (strain ATCC BAA-159 / DSM 3647 / Goe1 / Go1 / JCM 11833 / OCM 88) (Methanosarcina frisia).